The following is a 582-amino-acid chain: MKSIILFVLSLLLILEKQAAVMGQKGGSKGQLPSGSSQFPHGQKGQHYFGQKDQQHTKSKGSFSIQHTYHVDINDHDWTRKSQQYDLNALHKATKSKQHLGGSQQLLNYKQEGRDHDKSKGHFHMIVIHHKGGQAHHGTQNPSQDQGNSPSGKGLSSQCSNTEKRLWVHGLSKEQASASGAQKGRTQGGSQSSYVLQTEELVVNKQQRETKNSHQNKGHYQNVVDVREEHSSKLQTSLHPAHQDRLQHGPKDIFTTQDELLVYNKNQHQTKNLSQDQEHGRKAHKISYPSSRTEERQLHHGEKSVQKDVSKGSISIQTEEKIHGKSQNQVTIHSQDQEHGHKENKISYQSSSTEERHLNCGEKGIQKGVSKGSISIQTEEQIHGKSQNQVRIPSQAQEYGHKENKISYQSSSTEERRLNSGEKDVQKGVSKGSISIQTEEKIHGKSQNQVTIPSQDQEHGHKENKMSYQSSSTEERRLNYGGKSTQKDVSQSSISFQIEKLVEGKSQIQTPNPNQDQWSGQNAKGKSGQSADSKQDLLSHEQKGRYKQESSESHNIVITEHEVAQDDHLTQQYNEDRNPIST.

A signal peptide spans 1-23 (MKSIILFVLSLLLILEKQAAVMG). Residues 24–59 (QKGGSKGQLPSGSSQFPHGQKGQHYFGQKDQQHTKS) are disordered. Polar residues predominate over residues 31 to 40 (QLPSGSSQFP). 3 repeat units span residues 70–129 (HVDI…IVIH), 141–200 (NPSQ…QTEE), and 201–260 (LVVN…QDEL). Positions 70–559 (HVDINDHDWT…SSESHNIVIT (490 aa)) are repeat-rich region. Disordered stretches follow at residues 132–160 (GGQA…SQCS), 173–194 (KEQA…QSSY), 228–248 (EEHS…RLQH), and 269–582 (QTKN…PIST). Polar residues-rich tracts occupy residues 137 to 160 (HGTQ…SQCS) and 174 to 194 (EQAS…QSSY). The interval 261 to 500 (LVYNKNQHQT…QSSISFQIEK (240 aa)) is 4 X 60 AA tandem repeats, type I. Asn272 is a glycosylation site (N-linked (GlcNAc...) asparagine). The segment covering 292–310 (RTEERQLHHGEKSVQKDVS) has biased composition (basic and acidic residues). A compositionally biased stretch (polar residues) spans 325-334 (KSQNQVTIHS). A compositionally biased stretch (basic and acidic residues) spans 335–345 (QDQEHGHKENK). Residues 372–397 (GSISIQTEEQIHGKSQNQVRIPSQAQ) show a composition bias toward polar residues. Residues 413–426 (TEERRLNSGEKDVQ) show a composition bias toward basic and acidic residues. Polar residues predominate over residues 445 to 455 (KSQNQVTIPSQ). A compositionally biased stretch (basic and acidic residues) spans 456–465 (DQEHGHKENK). Composition is skewed to polar residues over residues 482–496 (GKST…SISF) and 506–532 (SQIQ…QSAD). One copy of the 3-2 repeat lies at 501–559 (LVEGKSQIQTPNPNQDQWSGQNAKGKSGQSADSKQDLLSHEQKGRYKQESSESHNIVIT). 2 stretches are compositionally biased toward basic and acidic residues: residues 533–552 (SKQD…ESSE) and 559–582 (TEHE…PIST).

Belongs to the semenogelin family. In terms of assembly, interacts with SERPINA5. In terms of processing, semenogelin-2 is thought to form both the 71 kDa polypeptide and, in its glycosylated form, the 76 kDa polypeptide. In terms of tissue distribution, seminal vesicles, and to a much lesser extent, epididymis.

Its subcellular location is the secreted. In terms of biological role, participates in the formation of a gel matrix (sperm coagulum) entrapping the accessory gland secretions and ejaculated spermatozoa. In Homo sapiens (Human), this protein is Semenogelin-2 (SEMG2).